A 329-amino-acid polypeptide reads, in one-letter code: Putative L-ascorbate peroxidase 6 (329 aa).

Residue His123 is the Proton acceptor of the active site. His244 is a binding site for heme b.

The protein belongs to the peroxidase family. Ascorbate peroxidase subfamily. The cofactor is heme b.

It carries out the reaction L-ascorbate + H2O2 = L-dehydroascorbate + 2 H2O. In terms of biological role, plays a key role in hydrogen peroxide removal. This Arabidopsis thaliana (Mouse-ear cress) protein is Putative L-ascorbate peroxidase 6 (APX6).